A 173-amino-acid polypeptide reads, in one-letter code: Small ribosomal subunit protein uS10m (173 aa).

Belongs to the universal ribosomal protein uS10 family. Component of the mitochondrial ribosome small subunit (28S) which comprises a 12S rRNA and about 30 distinct proteins.

The protein localises to the mitochondrion. The polypeptide is Small ribosomal subunit protein uS10m (mRpS10) (Drosophila melanogaster (Fruit fly)).